A 399-amino-acid polypeptide reads, in one-letter code: Lipoyl synthase, mitochondrial (399 aa).

The N-terminal 30 residues, 1-30 (MRAVLELTRRRARNARFARARAVVGARARA), are a transit peptide targeting the mitochondrion. Residues 31–41 (ADAQELRDDSK) are compositionally biased toward basic and acidic residues. A disordered region spans residues 31 to 58 (ADAQELRDDSKGGSSVDKATSTAAEARE). 7 residues coordinate [4Fe-4S] cluster: cysteine 131, cysteine 136, cysteine 142, cysteine 162, cysteine 166, cysteine 169, and serine 375. The region spanning 145-364 (GGDGKTATAT…QEIAEEMGFL (220 aa)) is the Radical SAM core domain.

The protein belongs to the radical SAM superfamily. Lipoyl synthase family. Requires [4Fe-4S] cluster as cofactor.

The protein localises to the mitochondrion. It carries out the reaction [[Fe-S] cluster scaffold protein carrying a second [4Fe-4S](2+) cluster] + N(6)-octanoyl-L-lysyl-[protein] + 2 oxidized [2Fe-2S]-[ferredoxin] + 2 S-adenosyl-L-methionine + 4 H(+) = [[Fe-S] cluster scaffold protein] + N(6)-[(R)-dihydrolipoyl]-L-lysyl-[protein] + 4 Fe(3+) + 2 hydrogen sulfide + 2 5'-deoxyadenosine + 2 L-methionine + 2 reduced [2Fe-2S]-[ferredoxin]. It participates in protein modification; protein lipoylation via endogenous pathway; protein N(6)-(lipoyl)lysine from octanoyl-[acyl-carrier-protein]: step 2/2. Catalyzes the radical-mediated insertion of two sulfur atoms into the C-6 and C-8 positions of the octanoyl moiety bound to the lipoyl domains of lipoate-dependent enzymes, thereby converting the octanoylated domains into lipoylated derivatives. The sequence is that of Lipoyl synthase, mitochondrial from Ostreococcus lucimarinus (strain CCE9901).